The primary structure comprises 187 residues: Adenylate kinase (187 aa).

Position 10 to 15 (10 to 15) interacts with ATP; that stretch reads GSGKGT. An NMP region spans residues 30 to 59; it reads STGDMLRAEIAAGTELGKQAKTVMDAGNLV. AMP is bound by residues Thr-31, Arg-36, 57 to 59, 85 to 88, and Gln-92; these read NLV and GYPR. The LID stretch occupies residues 126–136; the sequence is GRAKEQGRADD. Arg-127 is a binding site for ATP. AMP contacts are provided by Arg-133 and Arg-144. Gly-172 provides a ligand contact to ATP.

Belongs to the adenylate kinase family. As to quaternary structure, monomer.

It localises to the cytoplasm. It catalyses the reaction AMP + ATP = 2 ADP. It functions in the pathway purine metabolism; AMP biosynthesis via salvage pathway; AMP from ADP: step 1/1. Catalyzes the reversible transfer of the terminal phosphate group between ATP and AMP. Plays an important role in cellular energy homeostasis and in adenine nucleotide metabolism. This is Adenylate kinase from Stenotrophomonas maltophilia (strain K279a).